A 354-amino-acid polypeptide reads, in one-letter code: Selenide, water dikinase (354 aa).

C23 is an active-site residue. ATP contacts are provided by residues K26 and 54 to 56; that span reads TSD. A Mg(2+)-binding site is contributed by D57. ATP is bound by residues D74, D97, and 145–147; that span reads GHS. D97 provides a ligand contact to Mg(2+). D233 lines the Mg(2+) pocket.

It belongs to the selenophosphate synthase 1 family. Class I subfamily. Homodimer. Requires Mg(2+) as cofactor.

It catalyses the reaction hydrogenselenide + ATP + H2O = selenophosphate + AMP + phosphate + 2 H(+). In terms of biological role, synthesizes selenophosphate from selenide and ATP. This is Selenide, water dikinase from Burkholderia pseudomallei (strain K96243).